The primary structure comprises 500 residues: Probable malate:quinone oxidoreductase (500 aa).

The protein belongs to the MQO family. The cofactor is FAD.

The catalysed reaction is (S)-malate + a quinone = a quinol + oxaloacetate. Its pathway is carbohydrate metabolism; tricarboxylic acid cycle; oxaloacetate from (S)-malate (quinone route): step 1/1. The protein is Probable malate:quinone oxidoreductase of Corynebacterium glutamicum (strain R).